Consider the following 262-residue polypeptide: Aquaporin TIP3-1 (262 aa).

The next 2 membrane-spanning stretches (helical) occupy residues 27–47 (AAIS…GSVL) and 61–81 (GLVA…AVAV). An NPA 1 motif is present at residues 89 to 91 (NPA). A run of 3 helical transmembrane segments spans residues 104–124 (LVRA…ATLL), 148–168 (AVLL…ATVI), and 175–195 (VGTI…LAGG). The NPA 2 motif lies at 203–205 (NPA). Residues 223–243 (YWLGPFLGAGLAGLVYEYLVI) traverse the membrane as a helical segment.

It belongs to the MIP/aquaporin (TC 1.A.8) family. TIP (TC 1.A.8.10) subfamily.

Its subcellular location is the vacuole membrane. Aquaporins facilitate the transport of water and small neutral solutes across cell membranes. This chain is Aquaporin TIP3-1 (TIP3-1), found in Zea mays (Maize).